We begin with the raw amino-acid sequence, 360 residues long: 3-dehydroquinate synthase (360 aa).

Residues 70–75 (DGEKYK), 104–108 (GVIGD), 128–129 (TT), Lys141, and Lys150 contribute to the NAD(+) site. The Zn(2+) site is built by Glu183, His246, and His263.

The protein belongs to the sugar phosphate cyclases superfamily. Dehydroquinate synthase family. Requires Co(2+) as cofactor. Zn(2+) serves as cofactor. It depends on NAD(+) as a cofactor.

It is found in the cytoplasm. The enzyme catalyses 7-phospho-2-dehydro-3-deoxy-D-arabino-heptonate = 3-dehydroquinate + phosphate. The protein operates within metabolic intermediate biosynthesis; chorismate biosynthesis; chorismate from D-erythrose 4-phosphate and phosphoenolpyruvate: step 2/7. In terms of biological role, catalyzes the conversion of 3-deoxy-D-arabino-heptulosonate 7-phosphate (DAHP) to dehydroquinate (DHQ). The protein is 3-dehydroquinate synthase of Acinetobacter baumannii (strain SDF).